Consider the following 442-residue polypeptide: HTH-type transcriptional regulator NorG (442 aa).

The 45-residue stretch at 2-46 (KIPPQRQLAIQYNVNRVTIIKSIELLEAEGFIYTKVGSGTYVNDY) folds into the HTH gntR-type domain. The segment at residues 6 to 25 (QRQLAIQYNVNRVTIIKSIE) is a DNA-binding region (H-T-H motif). Position 288 is an N6-(pyridoxal phosphate)lysine (Lys288).

This sequence in the C-terminal section; belongs to the class-I pyridoxal-phosphate-dependent aminotransferase family. Requires pyridoxal 5'-phosphate as cofactor.

Positively regulates the expression of the NorB efflux pump and negatively regulates the expression of the AbcA efflux pump. Binds specifically to the promoters of norA, norB and norC and abcA genes. Could also have an aminotransferase activity. The protein is HTH-type transcriptional regulator NorG (norG) of Staphylococcus aureus (strain Mu50 / ATCC 700699).